Consider the following 288-residue polypeptide: Energy-coupling factor transporter ATP-binding protein EcfA2 (288 aa).

An ABC transporter domain is found at 2–244; sequence IKFEKVNYTY…VDFLKAHELG (243 aa). 39-46 contacts ATP; that stretch reads GHTGSGKS.

The protein belongs to the ABC transporter superfamily. Energy-coupling factor EcfA family. As to quaternary structure, forms a stable energy-coupling factor (ECF) transporter complex composed of 2 membrane-embedded substrate-binding proteins (S component), 2 ATP-binding proteins (A component) and 2 transmembrane proteins (T component).

The protein resides in the cell membrane. In terms of biological role, ATP-binding (A) component of a common energy-coupling factor (ECF) ABC-transporter complex. Unlike classic ABC transporters this ECF transporter provides the energy necessary to transport a number of different substrates. The polypeptide is Energy-coupling factor transporter ATP-binding protein EcfA2 (Lactococcus lactis subsp. lactis (strain IL1403) (Streptococcus lactis)).